The chain runs to 74 residues: DNA-directed RNA polymerase subunit omega (74 aa).

The protein belongs to the RNA polymerase subunit omega family. In terms of assembly, the RNAP catalytic core consists of 2 alpha, 1 beta, 1 beta' and 1 omega subunit. When a sigma factor is associated with the core the holoenzyme is formed, which can initiate transcription.

The enzyme catalyses RNA(n) + a ribonucleoside 5'-triphosphate = RNA(n+1) + diphosphate. Promotes RNA polymerase assembly. Latches the N- and C-terminal regions of the beta' subunit thereby facilitating its interaction with the beta and alpha subunits. The chain is DNA-directed RNA polymerase subunit omega from Campylobacter jejuni subsp. jejuni serotype O:6 (strain 81116 / NCTC 11828).